The primary structure comprises 216 residues: Phosphatidylserine decarboxylase proenzyme (216 aa).

The active-site Schiff-base intermediate with substrate; via pyruvic acid is the S182. Residue S182 is modified to Pyruvic acid (Ser); by autocatalysis.

It belongs to the phosphatidylserine decarboxylase family. PSD-A subfamily. Heterodimer of a large membrane-associated beta subunit and a small pyruvoyl-containing alpha subunit. Pyruvate is required as a cofactor. In terms of processing, is synthesized initially as an inactive proenzyme. Formation of the active enzyme involves a self-maturation process in which the active site pyruvoyl group is generated from an internal serine residue via an autocatalytic post-translational modification. Two non-identical subunits are generated from the proenzyme in this reaction, and the pyruvate is formed at the N-terminus of the alpha chain, which is derived from the carboxyl end of the proenzyme. The post-translation cleavage follows an unusual pathway, termed non-hydrolytic serinolysis, in which the side chain hydroxyl group of the serine supplies its oxygen atom to form the C-terminus of the beta chain, while the remainder of the serine residue undergoes an oxidative deamination to produce ammonia and the pyruvoyl prosthetic group on the alpha chain.

The protein localises to the cell membrane. The enzyme catalyses a 1,2-diacyl-sn-glycero-3-phospho-L-serine + H(+) = a 1,2-diacyl-sn-glycero-3-phosphoethanolamine + CO2. The protein operates within phospholipid metabolism; phosphatidylethanolamine biosynthesis; phosphatidylethanolamine from CDP-diacylglycerol: step 2/2. Its function is as follows. Catalyzes the formation of phosphatidylethanolamine (PtdEtn) from phosphatidylserine (PtdSer). The sequence is that of Phosphatidylserine decarboxylase proenzyme from Burkholderia mallei (strain NCTC 10247).